A 541-amino-acid polypeptide reads, in one-letter code: MPTFVDRVVLHAAAGDGGHGCCSIHREKFKPLGGPDGGNGGRGGNVLLRVDSGVTTLLDFHFHPHQRAGGGRPGQGSNRHGADGDDLVLSVPDGTVVLSPDGEQIVDLVGAGSTYVLAHGGRGGRGNASLASARRKAPGFAELGEPGEQLDAVLELKSVADVALVGFPSAGKSSLVSVLSAARPKIADYPFTTLVPNLGVVQAGDHRPFTVADVPGLIPGASQGRGLGLEFLRHIERCSLIVHVLDCATLEPGRDPLTDLDVIEAELAAYTTDLSDRPRLVVLNKVDVPDAAELAELVTPDLQARGLAVHQISTASRHGVRGLALALAELVASLRAAVPSPAATRIVLRPRAVDEPDFTVRAEGDGFVVGGTKPLRWVRQTDFSNEEAIGYLADRLARLGVEKELAKRGAFPGVAVTIGAVTFDWEPTLSGREALLAAGGGDGDGYGEAGYGAVDTAVTIATVGGSGGTRAGARGGAVVSDLPLGPRGTDLRLRTSKRLTRAQRTALSDSADDFDDGAGFSDSAAFGDSGGSGGDADGGRG.

Residues 2–159 enclose the Obg domain; it reads PTFVDRVVLH…LDAVLELKSV (158 aa). Positions 63 to 84 are disordered; that stretch reads HPHQRAGGGRPGQGSNRHGADG. Residues 160–332 enclose the OBG-type G domain; the sequence is ADVALVGFPS…LALALAELVA (173 aa). GTP is bound by residues 166 to 173, 191 to 195, 213 to 216, 284 to 287, and 313 to 315; these read GFPSAGKS, FTTLV, DVPG, NKVD, and STA. Mg(2+)-binding residues include Ser173 and Thr193. The OCT domain occupies 350-427; sequence PRAVDEPDFT…IGAVTFDWEP (78 aa). A disordered region spans residues 497–541; the sequence is KRLTRAQRTALSDSADDFDDGAGFSDSAAFGDSGGSGGDADGGRG. Positions 517-527 are enriched in low complexity; the sequence is GAGFSDSAAFG. Residues 528-541 are compositionally biased toward gly residues; that stretch reads DSGGSGGDADGGRG.

It belongs to the TRAFAC class OBG-HflX-like GTPase superfamily. OBG GTPase family. Monomer. It depends on Mg(2+) as a cofactor.

It localises to the cytoplasm. Functionally, an essential GTPase which binds GTP, GDP and possibly (p)ppGpp with moderate affinity, with high nucleotide exchange rates and a fairly low GTP hydrolysis rate. Plays a role in control of the cell cycle, stress response, ribosome biogenesis and in those bacteria that undergo differentiation, in morphogenesis control. The protein is GTPase Obg of Parafrankia sp. (strain EAN1pec).